Here is a 312-residue protein sequence, read N- to C-terminus: Methionyl-tRNA formyltransferase (312 aa).

117-120 (SLLP) is a binding site for (6S)-5,6,7,8-tetrahydrofolate.

It belongs to the Fmt family.

It catalyses the reaction L-methionyl-tRNA(fMet) + (6R)-10-formyltetrahydrofolate = N-formyl-L-methionyl-tRNA(fMet) + (6S)-5,6,7,8-tetrahydrofolate + H(+). Functionally, attaches a formyl group to the free amino group of methionyl-tRNA(fMet). The formyl group appears to play a dual role in the initiator identity of N-formylmethionyl-tRNA by promoting its recognition by IF2 and preventing the misappropriation of this tRNA by the elongation apparatus. This chain is Methionyl-tRNA formyltransferase, found in Bordetella bronchiseptica (strain ATCC BAA-588 / NCTC 13252 / RB50) (Alcaligenes bronchisepticus).